Reading from the N-terminus, the 434-residue chain is ATP phosphoribosyltransferase regulatory subunit (434 aa).

The protein belongs to the class-II aminoacyl-tRNA synthetase family. HisZ subfamily. As to quaternary structure, heteromultimer composed of HisG and HisZ subunits.

It localises to the cytoplasm. Its pathway is amino-acid biosynthesis; L-histidine biosynthesis; L-histidine from 5-phospho-alpha-D-ribose 1-diphosphate: step 1/9. In terms of biological role, required for the first step of histidine biosynthesis. May allow the feedback regulation of ATP phosphoribosyltransferase activity by histidine. The polypeptide is ATP phosphoribosyltransferase regulatory subunit (Geobacter metallireducens (strain ATCC 53774 / DSM 7210 / GS-15)).